Here is a 583-residue protein sequence, read N- to C-terminus: Peptidyl-prolyl cis-trans isomerase FKBP10 (583 aa).

A signal peptide spans 1–27; it reads MLRAGPPSHTLLRLPLLQLLLLLLVQA. 4 PPIase FKBP-type domains span residues 63–151, 175–263, 287–375, and 400–487; these read GDFV…LDVW, SDFV…IDVH, GDFM…IDFH, and GDFV…VSRE. Asparagine 71, asparagine 183, and asparagine 295 each carry an N-linked (GlcNAc...) asparagine glycan. 2 EF-hand domains span residues 498–533 and 543–578; these read WHED…QVSE and DPEK…DQDR. The Ca(2+) site is built by aspartate 511, asparagine 513, aspartate 515, glutamate 517, glutamate 522, aspartate 556, asparagine 558, aspartate 560, lysine 562, and glutamate 567. The disordered stretch occupies residues 534–583; it reads GKGRLLPGQDPEKTIGDMFQNQDRNQDGKITAEELKLKSDEDQDRVHEEL. A compositionally biased stretch (basic and acidic residues) spans 557–583; sequence RNQDGKITAEELKLKSDEDQDRVHEEL. A Prevents secretion from ER motif is present at residues 580-583; sequence HEEL.

In terms of processing, glycosylated and phosphorylated.

The protein resides in the endoplasmic reticulum lumen. It carries out the reaction [protein]-peptidylproline (omega=180) = [protein]-peptidylproline (omega=0). Its activity is regulated as follows. Inhibited by both FK506 and rapamycin, but not by cyclosporin A. PPIases accelerate the folding of proteins during protein synthesis. The polypeptide is Peptidyl-prolyl cis-trans isomerase FKBP10 (FKBP10) (Bos taurus (Bovine)).